A 126-amino-acid polypeptide reads, in one-letter code: UPF0538 protein C2orf76 homolog (126 aa).

The protein belongs to the UPF0538 family.

The sequence is that of UPF0538 protein C2orf76 homolog from Mus musculus (Mouse).